The chain runs to 379 residues: Cytochrome b (379 aa).

4 consecutive transmembrane segments (helical) span residues 33 to 53 (FGSL…FLAM), 77 to 98 (WLIR…YLHI), 113 to 133 (WNIG…GYVL), and 178 to 198 (FFAF…IHFF). Heme b contacts are provided by His83 and His97. Residues His182 and His196 each contribute to the heme b site. His201 contacts a ubiquinone. A run of 4 helical transmembrane segments spans residues 226–246 (IKDI…VLFS), 288–308 (LGGV…PMLH), 320–340 (FSQC…WIGG), and 347–367 (YITI…IVSR).

This sequence belongs to the cytochrome b family. In terms of assembly, the cytochrome bc1 complex contains 11 subunits: 3 respiratory subunits (MT-CYB, CYC1 and UQCRFS1), 2 core proteins (UQCRC1 and UQCRC2) and 6 low-molecular weight proteins (UQCRH/QCR6, UQCRB/QCR7, UQCRQ/QCR8, UQCR10/QCR9, UQCR11/QCR10 and a cleavage product of UQCRFS1). This cytochrome bc1 complex then forms a dimer. The cofactor is heme b.

It localises to the mitochondrion inner membrane. In terms of biological role, component of the ubiquinol-cytochrome c reductase complex (complex III or cytochrome b-c1 complex) that is part of the mitochondrial respiratory chain. The b-c1 complex mediates electron transfer from ubiquinol to cytochrome c. Contributes to the generation of a proton gradient across the mitochondrial membrane that is then used for ATP synthesis. This Dolichotis patagonum (Patagonian mara) protein is Cytochrome b (MT-CYB).